A 290-amino-acid chain; its full sequence is Elongation factor Ts (290 aa).

The segment at 81–84 is involved in Mg(2+) ion dislocation from EF-Tu; the sequence is TDFV.

Belongs to the EF-Ts family.

The protein resides in the cytoplasm. Associates with the EF-Tu.GDP complex and induces the exchange of GDP to GTP. It remains bound to the aminoacyl-tRNA.EF-Tu.GTP complex up to the GTP hydrolysis stage on the ribosome. This is Elongation factor Ts from Vesicomyosocius okutanii subsp. Calyptogena okutanii (strain HA).